The sequence spans 657 residues: N-acetylgalactosaminyltransferase 7 (657 aa).

Over 1 to 6 (MRLKIG) the chain is Cytoplasmic. A helical; Signal-anchor for type II membrane protein transmembrane segment spans residues 7–29 (FILRSLLVVGSFLGLVVLWSSLT). Residues 30 to 657 (PRPDDPSPLS…KWEMNNIHSV (628 aa)) are Lumenal-facing. Residues 31–65 (RPDDPSPLSRMREDRDVNDPMPNRGGNGLAPGEDR) form a disordered region. 5 disulfide bridges follow: cysteine 197–cysteine 435, cysteine 426–cysteine 507, cysteine 545–cysteine 562, cysteine 585–cysteine 600, and cysteine 625–cysteine 640. The tract at residues 206–317 (LLTSSVVIVF…VNWYAPLVAP (112 aa)) is catalytic subdomain A. Aspartate 247 and arginine 277 together coordinate substrate. 2 residues coordinate Mn(2+): aspartate 301 and histidine 303. The interval 381–443 (PYRSPAMAGG…PCSRVGHIYR (63 aa)) is catalytic subdomain B. Tryptophan 412 contributes to the substrate binding site. Histidine 440 provides a ligand contact to Mn(2+). Residue arginine 443 participates in substrate binding. The region spanning 532-652 (VDWGEIRGFE…SKTTQKWEMN (121 aa)) is the Ricin B-type lectin domain.

Belongs to the glycosyltransferase 2 family. GalNAc-T subfamily. Mn(2+) is required as a cofactor. In terms of tissue distribution, widely expressed. Expressed in uterus, retina, kidney, small intestine, omentum, stomach and CNS.

Its subcellular location is the golgi apparatus membrane. It catalyses the reaction L-seryl-[protein] + UDP-N-acetyl-alpha-D-galactosamine = a 3-O-[N-acetyl-alpha-D-galactosaminyl]-L-seryl-[protein] + UDP + H(+). The catalysed reaction is L-threonyl-[protein] + UDP-N-acetyl-alpha-D-galactosamine = a 3-O-[N-acetyl-alpha-D-galactosaminyl]-L-threonyl-[protein] + UDP + H(+). The protein operates within protein modification; protein glycosylation. In terms of biological role, glycopeptide transferase involved in O-linked oligosaccharide biosynthesis, which catalyzes the transfer of an N-acetyl-D-galactosamine residue to an already glycosylated peptide. In contrast to other proteins of the family, it does not act as a peptide transferase that transfers GalNAc onto serine or threonine residue on the protein receptor, but instead requires the prior addition of a GalNAc on a peptide before adding additional GalNAc moieties. Some peptide transferase activity is however not excluded, considering that its appropriate peptide substrate may remain unidentified. The polypeptide is N-acetylgalactosaminyltransferase 7 (GALNT7) (Homo sapiens (Human)).